Consider the following 130-residue polypeptide: Riboflavin kinase (130 aa).

Gly-12 to Ala-17 is a CDP binding site. Mg(2+) contacts are provided by Thr-39 and Asn-41. FMN is bound by residues Thr-90 and Glu-98. Lys-103–Arg-106 is a binding site for CDP.

It belongs to the archaeal riboflavin kinase family. It depends on Mg(2+) as a cofactor.

The catalysed reaction is riboflavin + CTP = CDP + FMN + H(+). It participates in cofactor biosynthesis; FMN biosynthesis; FMN from riboflavin (CTP route): step 1/1. Catalyzes the CTP-dependent phosphorylation of riboflavin (vitamin B2) to form flavin mononucleotide (FMN). The protein is Riboflavin kinase of Staphylothermus marinus (strain ATCC 43588 / DSM 3639 / JCM 9404 / F1).